The chain runs to 938 residues: Translation initiation factor IF-2 (938 aa).

A disordered region spans residues 55 to 322 (KAEASAAPAA…RKSKRARRQE (268 aa)). Low complexity-rich tracts occupy residues 57-68 (EASAAPAAPAEK) and 77-117 (KKAA…AAAP). Over residues 118–136 (KPGPKPAPVAEQPAPPAEP) the composition is skewed to pro residues. Low complexity-rich tracts occupy residues 141–153 (APEA…APAA), 180–198 (GMGR…AGDN), and 224–233 (MMPKSPSAFG). Residues 247–293 (PGRGGAPGRGGAPGRGGVGTGAPGRGGAPGGGFGPSGGGRPGGGRPG) are compositionally biased toward gly residues. Basic residues predominate over residues 310–319 (RRGRKSKRAR). The tr-type G domain occupies 431-603 (ARPPVVTVMG…VVLTADASLD (173 aa)). The tract at residues 440–447 (GHVDHGKT) is G1. 440-447 (GHVDHGKT) contributes to the GTP binding site. Residues 465–469 (GITQH) form a G2 region. Residues 490 to 493 (DTPG) are G3. GTP-binding positions include 490–494 (DTPGH) and 544–547 (NKID). The interval 544–547 (NKID) is G4. Residues 580 to 582 (SAK) are G5.

This sequence belongs to the TRAFAC class translation factor GTPase superfamily. Classic translation factor GTPase family. IF-2 subfamily.

It is found in the cytoplasm. Its function is as follows. One of the essential components for the initiation of protein synthesis. Protects formylmethionyl-tRNA from spontaneous hydrolysis and promotes its binding to the 30S ribosomal subunits. Also involved in the hydrolysis of GTP during the formation of the 70S ribosomal complex. The protein is Translation initiation factor IF-2 of Nocardioides sp. (strain ATCC BAA-499 / JS614).